The primary structure comprises 378 residues: Chaperone protein DnaJ (378 aa).

Residues 5-70 (DYYQILGIPK…EKRTAYDQYG (66 aa)) enclose the J domain. Residues 133 to 211 (GTTKEIRIPT…CRGQGRIKTN (79 aa)) form a CR-type zinc finger. Residues cysteine 146, cysteine 149, cysteine 163, cysteine 166, cysteine 185, cysteine 188, cysteine 199, and cysteine 202 each contribute to the Zn(2+) site. CXXCXGXG motif repeat units follow at residues 146–153 (CKTCYGMG), 163–170 (CSTCHGKG), 185–192 (CPTCNGIG), and 199–206 (CRMCRGQG).

The protein belongs to the DnaJ family. Homodimer. It depends on Zn(2+) as a cofactor.

The protein resides in the cytoplasm. In terms of biological role, participates actively in the response to hyperosmotic and heat shock by preventing the aggregation of stress-denatured proteins and by disaggregating proteins, also in an autonomous, DnaK-independent fashion. Unfolded proteins bind initially to DnaJ; upon interaction with the DnaJ-bound protein, DnaK hydrolyzes its bound ATP, resulting in the formation of a stable complex. GrpE releases ADP from DnaK; ATP binding to DnaK triggers the release of the substrate protein, thus completing the reaction cycle. Several rounds of ATP-dependent interactions between DnaJ, DnaK and GrpE are required for fully efficient folding. Also involved, together with DnaK and GrpE, in the DNA replication of plasmids through activation of initiation proteins. The polypeptide is Chaperone protein DnaJ (Buchnera aphidicola subsp. Schizaphis graminum (strain Sg)).